Reading from the N-terminus, the 129-residue chain is MSEVTNNPTHNRLLAKLRAMGPYLRDPQSKEGLYYFDCLSVCIDDRKSPELREFWGWWMELEATEGGFTANYHIGKYDVEGNWLDLAIPKNALEEVNKTQNCFHLKLVKTLEENFQLSVAYHEQSVEFV.

The essential for activity stretch occupies residues 99–119; sequence TQNCFHLKLVKTLEENFQLSV.

The protein belongs to the Crl family.

It localises to the cytoplasm. In terms of biological role, binds to the sigma-S subunit of RNA polymerase, activating expression of sigma-S-regulated genes. Stimulates RNA polymerase holoenzyme formation and may bind to several other sigma factors, such as sigma-70 and sigma-32. The chain is Sigma factor-binding protein Crl from Vibrio vulnificus (strain CMCP6).